The chain runs to 160 residues: Thebaine synthase 2 (160 aa).

A thebaine-binding site is contributed by Ser-74. His-89 (proton acceptor) is an active-site residue. Thr-105 is a binding site for thebaine.

The protein belongs to the MLP family. Homodimer (allosteric) and oligomers. Expressed in poppy latex.

It catalyses the reaction (7S)-O-acetylsalutaridinol = thebaine + acetate + H(+). The protein operates within alkaloid biosynthesis; morphine biosynthesis. Slightly inhibited by salutaridine and (7S)-salutaridinol. Its function is as follows. Catalyzes the formation of thebaine from (7S)-salutaridinol 7-O-acetate at the expense of labile hydroxylated by-products, which are preferentially produced by spontaneous allylic elimination. No visible activity toward (7S)-salutaridinol (at pH 7). This Papaver somniferum (Opium poppy) protein is Thebaine synthase 2.